A 365-amino-acid polypeptide reads, in one-letter code: Cobalt-precorrin-5B C(1)-methyltransferase (365 aa).

Belongs to the CbiD family.

It catalyses the reaction Co-precorrin-5B + S-adenosyl-L-methionine = Co-precorrin-6A + S-adenosyl-L-homocysteine. The protein operates within cofactor biosynthesis; adenosylcobalamin biosynthesis; cob(II)yrinate a,c-diamide from sirohydrochlorin (anaerobic route): step 6/10. Catalyzes the methylation of C-1 in cobalt-precorrin-5B to form cobalt-precorrin-6A. This chain is Cobalt-precorrin-5B C(1)-methyltransferase, found in Pseudomonas fluorescens (strain Pf0-1).